Consider the following 69-residue polypeptide: uncharacterized protein (69 aa).

This is an uncharacterized protein from Lepidoptera (butterflies and moths).